We begin with the raw amino-acid sequence, 130 residues long: Small ribosomal subunit protein uS8 (130 aa).

It belongs to the universal ribosomal protein uS8 family.

This is Small ribosomal subunit protein uS8 (RPS15A) from Strongylocentrotus purpuratus (Purple sea urchin).